The primary structure comprises 140 residues: Actin-depolymerizing factor 8 (140 aa).

The residue at position 6 (Ser-6) is a Phosphoserine. The ADF-H domain maps to 7-139 (GMHVNDECKI…SLDIIKGRLN (133 aa)).

Belongs to the actin-binding proteins ADF family. Expressed in the root trichoblast cells and developed root hairs.

It localises to the cytoplasm. The protein localises to the cytoskeleton. Actin-depolymerizing protein. Severs actin filaments (F-actin) and binds to actin monomers. The chain is Actin-depolymerizing factor 8 (ADF8) from Arabidopsis thaliana (Mouse-ear cress).